The primary structure comprises 451 residues: Mannan endo-1,6-alpha-mannosidase DFG5 (451 aa).

A signal peptide spans 1-21; that stretch reads MVSLQQLTISILLLFTASVQS. N86, N111, N135, N203, N243, N268, and N402 each carry an N-linked (GlcNAc...) asparagine glycan. A429 carries the GPI-anchor amidated alanine lipid modification. The propeptide at 430 to 451 is removed in mature form; the sequence is GAGVLTAIVLAVILGGAIWMIF.

The protein belongs to the glycosyl hydrolase 76 family. Post-translationally, the GPI-anchor is attached to the protein in the endoplasmic reticulum and serves to target the protein to the cell surface. There, the glucosamine-inositol phospholipid moiety is cleaved off and the GPI-modified mannoprotein is covalently attached via its lipidless GPI glycan remnant to the 1,6-beta-glucan of the outer cell wall layer. In terms of processing, N-mannosylated.

Its subcellular location is the secreted. The protein resides in the cell wall. It localises to the cell membrane. It catalyses the reaction Random hydrolysis of (1-&gt;6)-alpha-D-mannosidic linkages in unbranched (1-&gt;6)-mannans.. Functionally, required for normal synthesis of the cell wall and alkaline pH-induced hypha formation. In Candida albicans (strain SC5314 / ATCC MYA-2876) (Yeast), this protein is Mannan endo-1,6-alpha-mannosidase DFG5 (DFG5).